The chain runs to 237 residues: Ribonuclease PH (237 aa).

Phosphate contacts are provided by residues Arg86 and 124–126; that span reads GTR.

The protein belongs to the RNase PH family. In terms of assembly, homohexameric ring arranged as a trimer of dimers.

The catalysed reaction is tRNA(n+1) + phosphate = tRNA(n) + a ribonucleoside 5'-diphosphate. Its function is as follows. Phosphorolytic 3'-5' exoribonuclease that plays an important role in tRNA 3'-end maturation. Removes nucleotide residues following the 3'-CCA terminus of tRNAs; can also add nucleotides to the ends of RNA molecules by using nucleoside diphosphates as substrates, but this may not be physiologically important. Probably plays a role in initiation of 16S rRNA degradation (leading to ribosome degradation) during starvation. This Methylobacterium nodulans (strain LMG 21967 / CNCM I-2342 / ORS 2060) protein is Ribonuclease PH.